A 156-amino-acid polypeptide reads, in one-letter code: SsrA-binding protein (156 aa).

This sequence belongs to the SmpB family.

It localises to the cytoplasm. In terms of biological role, required for rescue of stalled ribosomes mediated by trans-translation. Binds to transfer-messenger RNA (tmRNA), required for stable association of tmRNA with ribosomes. tmRNA and SmpB together mimic tRNA shape, replacing the anticodon stem-loop with SmpB. tmRNA is encoded by the ssrA gene; the 2 termini fold to resemble tRNA(Ala) and it encodes a 'tag peptide', a short internal open reading frame. During trans-translation Ala-aminoacylated tmRNA acts like a tRNA, entering the A-site of stalled ribosomes, displacing the stalled mRNA. The ribosome then switches to translate the ORF on the tmRNA; the nascent peptide is terminated with the 'tag peptide' encoded by the tmRNA and targeted for degradation. The ribosome is freed to recommence translation, which seems to be the essential function of trans-translation. This Bacillus pumilus (strain SAFR-032) protein is SsrA-binding protein.